The chain runs to 30 residues: Cycloviolin-D (30 aa).

The cyclopeptide (Gly-Asn) cross-link spans 1-30 (GFPCGESCVFIPCISAAIGCSCKNKVCYRN). Disulfide bonds link cysteine 4/cysteine 20, cysteine 8/cysteine 22, and cysteine 13/cysteine 27.

Post-translationally, this is a cyclic peptide.

Its function is as follows. Probably participates in a plant defense mechanism. Has anti-HIV activity. The protein is Cycloviolin-D of Leonia cymosa (Sacha uba).